Here is a 152-residue protein sequence, read N- to C-terminus: Probable methionine-R-sulfoxide reductase B (152 aa).

One can recognise a MsrB domain in the interval 27–151; sequence QTEWKSVLPN…NSVCMAFEKK (125 aa). Residues C66, C69, C116, and C119 each contribute to the Zn(2+) site. C140 functions as the Nucleophile in the catalytic mechanism.

This sequence belongs to the MsrB Met sulfoxide reductase family. Requires Zn(2+) as cofactor.

The catalysed reaction is L-methionyl-[protein] + [thioredoxin]-disulfide + H2O = L-methionyl-(R)-S-oxide-[protein] + [thioredoxin]-dithiol. Its function is as follows. Methionine-sulfoxide reductase that specifically reduces methionine (R)-sulfoxide back to methionine. While in many cases, methionine oxidation is the result of random oxidation following oxidative stress, methionine oxidation is also a post-translational modification that takes place on specific residue. The sequence is that of Probable methionine-R-sulfoxide reductase B from Caenorhabditis elegans.